Here is an 83-residue protein sequence, read N- to C-terminus: GDIANGEQVFTGNCAACHSVZZZKTLELSSLWKAKSYLANFNGDESAIVYQVTNGKNAMPAFGGRLEDDEIANVASYVLSKAG.

Residues Cys14, Cys17, and His18 each coordinate heme c. Residue Lys24 is modified to N6-methyllysine; partial. Met59 serves as a coordination point for heme c.

The protein belongs to the cytochrome c family. PetJ subfamily. Monomer. Post-translationally, binds 1 heme c group covalently per subunit. In terms of processing, 50% of the molecules were found to be monomethylated at Lys-24.

It localises to the plastid. The protein resides in the chloroplast thylakoid lumen. Its function is as follows. Functions as an electron carrier between membrane-bound cytochrome b6-f and photosystem I in oxygenic photosynthesis. The sequence is that of Cytochrome c6 (petJ) from Diacronema lutheri (Unicellular marine alga).